The primary structure comprises 463 residues: Perilipin-5 (463 aa).

Positions 1–108 are interaction with LIPE; it reads MSEEEAAQIP…KLEEKLPFLQ (108 aa). The interval 1–173 is essential for lipid droplet targeting; that stretch reads MSEEEAAQIP…HFLPMTEEEL (173 aa). A phosphoserine mark is found at Ser2, Ser148, and Ser322. An interaction with PNPLA2 and ABHD5 region spans residues 185–463; it reads VGSVEDQRRQ…KHTLMPELDF (279 aa). The segment at 444 to 463 is recruits mitochondria at the lipid droplet surface; sequence QEPETPSCPVKHTLMPELDF.

Belongs to the perilipin family. Homooligomer. Interacts with PNPLA2; prevents interaction of PNPLA2 with ABHD5. Interacts with ABHD5; targets ABHD5 to lipid droplets and promotes interaction of ABHD5 with PNPLA2. Interacts with LIPE. Post-translationally, phosphorylated by PKA. Phosphorylated on serine in skeletal muscle at rest or upon lipolytic stimulation. In terms of tissue distribution, expressed in skeletal muscle, liver, heart and kidney.

The protein localises to the lipid droplet. It is found in the cytoplasm. It localises to the mitochondrion. In terms of biological role, lipid droplet-associated protein that maintains the balance between lipogenesis and lipolysis and also regulates fatty acid oxidation in oxidative tissues. Recruits mitochondria to the surface of lipid droplets and is involved in lipid droplet homeostasis by regulating both the storage of fatty acids in the form of triglycerides and the release of fatty acids for mitochondrial fatty acid oxidation. In lipid droplet triacylglycerol hydrolysis, plays a role as a scaffolding protein for three major key lipolytic players: ABHD5, PNPLA2 and LIPE. Reduces the triacylglycerol hydrolase activity of PNPLA2 by recruiting and sequestering PNPLA2 to lipid droplets. Phosphorylation by PKA enables lipolysis probably by promoting release of ABHD5 from the perilipin scaffold and by facilitating interaction of ABHD5 with PNPLA2. Also increases lipolysis through interaction with LIPE and upon PKA-mediated phosphorylation of LIPE. This Homo sapiens (Human) protein is Perilipin-5 (PLIN5).